A 125-amino-acid chain; its full sequence is Small ribosomal subunit protein uS12 (125 aa).

3-methylthioaspartic acid is present on Asp89.

It belongs to the universal ribosomal protein uS12 family. Part of the 30S ribosomal subunit. Contacts proteins S8 and S17. May interact with IF1 in the 30S initiation complex.

Functionally, with S4 and S5 plays an important role in translational accuracy. In terms of biological role, interacts with and stabilizes bases of the 16S rRNA that are involved in tRNA selection in the A site and with the mRNA backbone. Located at the interface of the 30S and 50S subunits, it traverses the body of the 30S subunit contacting proteins on the other side and probably holding the rRNA structure together. The combined cluster of proteins S8, S12 and S17 appears to hold together the shoulder and platform of the 30S subunit. The protein is Small ribosomal subunit protein uS12 of Bordetella petrii (strain ATCC BAA-461 / DSM 12804 / CCUG 43448).